Here is a 288-residue protein sequence, read N- to C-terminus: ATP synthase gamma chain (288 aa).

This sequence belongs to the ATPase gamma chain family. As to quaternary structure, F-type ATPases have 2 components, CF(1) - the catalytic core - and CF(0) - the membrane proton channel. CF(1) has five subunits: alpha(3), beta(3), gamma(1), delta(1), epsilon(1). CF(0) has three main subunits: a, b and c.

It is found in the cell inner membrane. Its function is as follows. Produces ATP from ADP in the presence of a proton gradient across the membrane. The gamma chain is believed to be important in regulating ATPase activity and the flow of protons through the CF(0) complex. The sequence is that of ATP synthase gamma chain from Trichlorobacter lovleyi (strain ATCC BAA-1151 / DSM 17278 / SZ) (Geobacter lovleyi).